Reading from the N-terminus, the 196-residue chain is Pyridoxal 5'-phosphate synthase subunit PdxT (196 aa).

Position 47-49 (Gly47–Ser49) interacts with L-glutamine. The Nucleophile role is filled by Cys79. L-glutamine contacts are provided by residues Arg106 and Ile134–Arg135. Catalysis depends on charge relay system residues His170 and Glu172.

This sequence belongs to the glutaminase PdxT/SNO family. As to quaternary structure, in the presence of PdxS, forms a dodecamer of heterodimers. Only shows activity in the heterodimer.

It catalyses the reaction aldehydo-D-ribose 5-phosphate + D-glyceraldehyde 3-phosphate + L-glutamine = pyridoxal 5'-phosphate + L-glutamate + phosphate + 3 H2O + H(+). The enzyme catalyses L-glutamine + H2O = L-glutamate + NH4(+). It functions in the pathway cofactor biosynthesis; pyridoxal 5'-phosphate biosynthesis. Functionally, catalyzes the hydrolysis of glutamine to glutamate and ammonia as part of the biosynthesis of pyridoxal 5'-phosphate. The resulting ammonia molecule is channeled to the active site of PdxS. The sequence is that of Pyridoxal 5'-phosphate synthase subunit PdxT from Halalkalibacterium halodurans (strain ATCC BAA-125 / DSM 18197 / FERM 7344 / JCM 9153 / C-125) (Bacillus halodurans).